We begin with the raw amino-acid sequence, 701 residues long: Elongation factor G 1 (701 aa).

One can recognise a tr-type G domain in the interval 8-290; the sequence is VRYRNIGICA…AVVEYLPAPT (283 aa). GTP contacts are provided by residues 17-24, 88-92, and 142-145; these read AHVDAGKT, DTPGH, and NKMD.

It belongs to the TRAFAC class translation factor GTPase superfamily. Classic translation factor GTPase family. EF-G/EF-2 subfamily.

The protein resides in the cytoplasm. Its function is as follows. Catalyzes the GTP-dependent ribosomal translocation step during translation elongation. During this step, the ribosome changes from the pre-translocational (PRE) to the post-translocational (POST) state as the newly formed A-site-bound peptidyl-tRNA and P-site-bound deacylated tRNA move to the P and E sites, respectively. Catalyzes the coordinated movement of the two tRNA molecules, the mRNA and conformational changes in the ribosome. In Saccharophagus degradans (strain 2-40 / ATCC 43961 / DSM 17024), this protein is Elongation factor G 1.